A 586-amino-acid polypeptide reads, in one-letter code: Probable zinc metalloprotease EGY3, chloroplastic (586 aa).

The N-terminal 54 residues, 1–54 (MASSSLVTSLLFSSSSSSNTATSTSSRRSFSLFSKNQYCKPRPLRRSSSRLLVR), are a transit peptide targeting the chloroplast. Disordered regions lie at residues 13-32 (SSSSSSNTATSTSSRRSFSL) and 58-122 (QQQQ…DWRS). The span at 61 to 73 (QEEKAAPAAESHH) shows a compositional bias: basic and acidic residues. Residues 103 to 195 (VKKSKEELEE…NTFKALDLNK (93 aa)) adopt a coiled-coil conformation. A run of 7 helical transmembrane segments spans residues 287–307 (LSAVALAVTTFGTIAIMSGFF), 318–338 (VSDVLPLFAGFLSILGVSEIA), 389–409 (ASAYLTSVALAVSAFVSDGSL), 427–447 (PLLSFVQAVIGPYADELGNVL), 454–474 (VGVPVDPLAFAGLLGIVVTSL), 506–526 (VALGAGAIIGGSVLCLAWGLF), and 550–570 (YAWGLVLAVVCLLTLFPNGGG).

It belongs to the peptidase M50B family.

It localises to the plastid. Its subcellular location is the chloroplast membrane. Probable membrane-associated metalloprotease that may be involved in chloroplast development. The chain is Probable zinc metalloprotease EGY3, chloroplastic (EGY3) from Oryza sativa subsp. japonica (Rice).